The sequence spans 515 residues: ATP synthase subunit alpha (515 aa).

171-178 (GDRQTGKT) lines the ATP pocket.

The protein belongs to the ATPase alpha/beta chains family. F-type ATPases have 2 components, CF(1) - the catalytic core - and CF(0) - the membrane proton channel. CF(1) has five subunits: alpha(3), beta(3), gamma(1), delta(1), epsilon(1). CF(0) has three main subunits: a(1), b(2) and c(9-12). The alpha and beta chains form an alternating ring which encloses part of the gamma chain. CF(1) is attached to CF(0) by a central stalk formed by the gamma and epsilon chains, while a peripheral stalk is formed by the delta and b chains.

Its subcellular location is the cell inner membrane. The enzyme catalyses ATP + H2O + 4 H(+)(in) = ADP + phosphate + 5 H(+)(out). Its function is as follows. Produces ATP from ADP in the presence of a proton gradient across the membrane. The alpha chain is a regulatory subunit. The sequence is that of ATP synthase subunit alpha from Xanthomonas axonopodis pv. citri (strain 306).